Reading from the N-terminus, the 641-residue chain is Leucine-rich repeat receptor-like serine/threonine/tyrosine-protein kinase SOBIR1 (641 aa).

An N-terminal signal peptide occupies residues 1-31 (MAVPTGSANLFLRPLILAVLSFLLLSSFVSS). The Extracellular portion of the chain corresponds to 32-284 (VEWLDIDSSD…KKKKSKKKKV (253 aa)). LRR repeat units lie at residues 112–133 (ELKE…DILS), 136–159 (QLEV…SSLS), 160–182 (RLRI…KNLR), 183–205 (NLEN…IVSF), and 207–228 (NLRF…VMSS). N154 carries N-linked (GlcNAc...) asparagine glycosylation. A glycan (N-linked (GlcNAc...) asparagine) is linked at N186. The interval 243-278 (AETPTSSPTNKPNNSTTSKAPKGAPKPGKLKKKKKK) is disordered. Residues 245 to 259 (TPTSSPTNKPNNSTT) are compositionally biased toward polar residues. The N-linked (GlcNAc...) asparagine glycan is linked to N256. Low complexity predominate over residues 260–269 (SKAPKGAPKP). The chain crosses the membrane as a helical span at residues 285–305 (AAWILGFVVGAIGGTISGFVF). Residues 306–641 (SVLFKLIIQA…VRTMLSQIKH (336 aa)) are Cytoplasmic-facing. The Protein kinase domain maps to 347-641 (LASLEIIGRG…VRTMLSQIKH (295 aa)). Residues 353–361 (IGRGGCGEV) and K377 each bind ATP. D489 acts as the Proton acceptor in catalysis.

This sequence belongs to the protein kinase superfamily. Ser/Thr protein kinase family. In terms of assembly, interacts with CST. Interacts with RLP23. Component of a trimeric complex composed of RLP23, SOBIR1 and BAK1. BAK1 is recruited into a pre-formed RLP23-SOBIR1 complex in a ligand-dependent manner. Post-translationally, autophosphorylated on Ser, Thr and Tyr residues. Mostly present in leaves and flowers, with increasing expression in older flowers.

The protein localises to the cell membrane. It catalyses the reaction L-seryl-[protein] + ATP = O-phospho-L-seryl-[protein] + ADP + H(+). The enzyme catalyses L-threonyl-[protein] + ATP = O-phospho-L-threonyl-[protein] + ADP + H(+). It carries out the reaction L-tyrosyl-[protein] + ATP = O-phospho-L-tyrosyl-[protein] + ADP + H(+). Dual specificity kinase acting on both serine/threonine- and tyrosine-containing substrates. Acting as a counterplayer of BIR1, promotes the activation of plant defense and cell death. Component of the RLP23-SOBIR1-BAK1 complex that mediates NLP-triggered immunity. Functions as an inhibitor/regulator of abscission, probably by regulating membrane trafficking during abscission. This is Leucine-rich repeat receptor-like serine/threonine/tyrosine-protein kinase SOBIR1 (SOBIR1) from Arabidopsis thaliana (Mouse-ear cress).